The chain runs to 304 residues: Ring-infected erythrocyte surface antigen (304 aa).

Residues asparagine 18 and asparagine 22 are each glycosylated (N-linked (GlcNAc...) asparagine). Basic and acidic residues predominate over residues 142–159 (EHDAEENVEHDAEENVEH). The interval 142 to 304 (EHDAEENVEH…EENVEEHNGI (163 aa)) is disordered. Residues 160–298 (DAEENAEENV…NVEEYDEENV (139 aa)) show a composition bias toward acidic residues.

The protein localises to the cell membrane. In terms of biological role, may disrupt the normal intermolecular interactions of the cytoplasmic domain of band 3 and thereby facilitate the invagination of the red cell membrane which is necessary for the formation of the parasitophorous vacuole. In Plasmodium falciparum (isolate Palo Alto / Uganda), this protein is Ring-infected erythrocyte surface antigen (RESA).